The sequence spans 96 residues: Large ribosomal subunit protein eL43 (96 aa).

Positions 41, 44, 59, and 62 each coordinate Zn(2+). Residues 41-62 (CPVCAFPKLKRAGTSIWVCEKC) form a C4-type zinc finger.

This sequence belongs to the eukaryotic ribosomal protein eL43 family. Putative zinc-binding subfamily. As to quaternary structure, part of the 50S ribosomal subunit. It depends on Zn(2+) as a cofactor.

Its function is as follows. Binds to the 23S rRNA. The chain is Large ribosomal subunit protein eL43 from Methanococcus maripaludis (strain DSM 14266 / JCM 13030 / NBRC 101832 / S2 / LL).